Consider the following 210-residue polypeptide: Mitochondrial import receptor subunit TOM20-2 (210 aa).

At Met-1 the chain carries N-acetylmethionine. The Cytoplasmic segment spans residues 1 to 178; the sequence is MEFSTADFER…SSKKKKRNTE (178 aa). 2 TPR repeats span residues 42-75 and 83-120; these read LLELSQFQPIPEAKLMLNDAISKLEEALTINPGK and ANAYTAHAFYVHDPEEAKEHFDKATEYFQRAENEDPGN. The span at 151-161 shows a compositional bias: gly residues; it reads GGGGGGGGGGM. The interval 151 to 172 is disordered; the sequence is GGGGGGGGGGMASSNVSQSSKK. Residues 179 to 199 traverse the membrane as a helical segment; the sequence is FTYDVCGWIILACGIVAWVGM. At 200-210 the chain is on the mitochondrial intermembrane side; it reads AKSLGPPPPAR.

It belongs to the Tom20 family. In terms of assembly, forms part of the preprotein translocase complex of the outer mitochondrial membrane (TOM complex) which consists of at least 6 different proteins (TOM5, TOM6, TOM7, TOM20, TOM22/TOM9 and TOM40). Component of a mitochondrial large protein complex that contains, at least, MIC60, DGS1, TOM40, TOM20 proteins, and petC/RISP. The N-terminus is blocked. As to expression, expressed in roots, flowers, young cotyledons and leaves.

Its subcellular location is the mitochondrion outer membrane. Its function is as follows. Central component of the receptor complex responsible for the recognition and translocation of cytosolically synthesized mitochondrial preproteins. Together with TOM22 functions as the transit peptide receptor at the surface of the mitochondrion outer membrane and facilitates the movement of preproteins into the translocation pore. In Arabidopsis thaliana (Mouse-ear cress), this protein is Mitochondrial import receptor subunit TOM20-2.